Reading from the N-terminus, the 179-residue chain is Large ribosomal subunit protein uL5 (179 aa).

This sequence belongs to the universal ribosomal protein uL5 family. Part of the 50S ribosomal subunit; part of the 5S rRNA/L5/L18/L25 subcomplex. Contacts the 5S rRNA and the P site tRNA. Forms a bridge to the 30S subunit in the 70S ribosome.

This is one of the proteins that bind and probably mediate the attachment of the 5S RNA into the large ribosomal subunit, where it forms part of the central protuberance. In the 70S ribosome it contacts protein S13 of the 30S subunit (bridge B1b), connecting the 2 subunits; this bridge is implicated in subunit movement. Contacts the P site tRNA; the 5S rRNA and some of its associated proteins might help stabilize positioning of ribosome-bound tRNAs. The chain is Large ribosomal subunit protein uL5 from Desulfatibacillum aliphaticivorans.